We begin with the raw amino-acid sequence, 1176 residues long: MAERKGTAKVDFLKKIEKEIQQKWDTERVFEVNASNLEKQTSKGKYFVTFPYPYMNGRLHLGHTFSLSKCEFAVGYQRLKGKCCLFPFGLHCTGMPIKACADKLKREIELYGCPPDFPDEEEEEEETSVKTEDIIIKDKAKGKKSKAAAKAGSSKYQWGIMKSLGLSDEEIVKFSEAEHWLDYFPPLAIQDLKRMGLKVDWRRSFITTDVNPYYDSFVRWQFLTLRERNKIKFGKRYTIYSPKDGQPCMDHDRQTGEGVGPQEYTLLKLKVLEPYPSKLSGLKGKNIFLVAATLRPETMFGQTNCWVRPDMKYIGFETVNGDIFICTQKAARNMSYQGFTKDNGVVPVVKELMGEEILGASLSAPLTSYKVIYVLPMLTIKEDKGTGVVTSVPSDSPDDIAALRDLKKKQALRAKYGIRDDMVLPFEPVPVIEIPGFGNLSAVTICDELKIQSQNDREKLAEAKEKIYLKGFYEGIMLVDGFKGQKVQDVKKTIQKKMIDAGDALIYMEPEKQVMSRSSDECVVALCDQWYLDYGEENWKKQTSQCLKNLETFCEETRRNFEATLGWLQEHACSRTYGLGTHLPWDEQWLIESLSDSTIYMAFYTVAHLLQGGNLHGQAESPLGIRPQQMTKEVWDYVFFKEAPFPKTQIAKEKLDQLKQEFEFWYPVDLRVSGKDLVPNHLSYYLYNHVAMWPEQSDKWPTAVRANGHLLLNSEKMSKSTGNFLTLTQAIDKFSADGMRLALADAGDTVEDANFVEAMADAGILRLYTWVEWVKEMVANWDSLRSGPASTFNDRVFASELNAGIIKTDQNYEKMMFKEALKTGFFEFQAAKDKYRELAVEGMHRELVFRFIEVQTLLLAPFCPHLCEHIWTLLGKPDSIMNASWPVAGPVNEVLIHSSQYLMEVTHDLRLRLKNYMMPAKGKKTDKQPLQKPSHCTIYVAKNYPPWQHTTLSVLRKHFEANNGKLPDNKVIASELGSMPELKKYMKKVMPFVAMIKENLEKMGPRILDLQLEFDEKAVLMENIVYLTNSLELEHIEVKFASEAEDKIREDCCPGKPLNVFRIEPGVSVSLVNPQPSNGHFSTKIEIRQGDNCDSIIRRLMKMNRGIKDLSKVKLMRFDDPLLGPRRVPVLGKEYTEKTPISEHAVFNVDLMSKKIHLTENGIRVDIGDTIIYLVH.

L-leucine contacts are provided by Tyr-52 and Tyr-54. The short motif at His-60–His-63 is the 'HIGH' region element. Ser-167 bears the Phosphoserine mark. Positions Gly-260–Glu-509 are editing domain. 2 residues coordinate L-leucine: Leu-594 and Ser-597. Positions Lys-716 to Ser-720 match the 'KMSKS' region motif. ATP is bound at residue Lys-719. Residue Ser-720 is modified to Phosphoserine. An N6-acetyllysine mark is found at Lys-970 and Lys-1047.

This sequence belongs to the class-I aminoacyl-tRNA synthetase family. In terms of assembly, part of the aminoacyl-tRNA synthetase multienzyme complex, also known as multisynthetase complex (MSC), that is composed of the aminoacyl-tRNA ligases for Arg (RARS1), Asp (DARS1), Gln (QARS1), Ile (IARS1), Leu (LARS1), Lys (KARS1), Met (MARS1) the bifunctional ligase for Glu and Pro (EPRS1) and the auxiliary subunits AIMP1/p43, AIMP2/p38 and EEF1E1/p18.

The protein localises to the cytoplasm. The enzyme catalyses tRNA(Leu) + L-leucine + ATP = L-leucyl-tRNA(Leu) + AMP + diphosphate. It carries out the reaction L-methionyl-tRNA(Leu) + H2O = tRNA(Leu) + L-methionine + H(+). With respect to regulation, 5-fluoro-1,3-dihydro-1-hydroxy-1,2-benzoxaborole inhibits LARS1 by forming a covalent adduct with the 3' adenosine of tRNA(Leu) at the editing site, thus locking the enzyme in an inactive conformation. In terms of biological role, aminoacyl-tRNA synthetase that catalyzes the specific attachment of leucine to its cognate tRNA (tRNA(Leu)). It performs tRNA aminoacylation in a two-step reaction: Leu is initially activated by ATP to form a leucyl-adenylate (Leu-AMP) intermediate; then the leucyl moiety is transferred to the acceptor 3' end of the tRNA to yield leucyl-tRNA. To improve the fidelity of catalytic reactions, it is also able to hydrolyze misactivated aminoacyl-adenylate intermediates (pre-transfer editing) and mischarged aminoacyl-tRNAs (post-transfer editing). This chain is Leucine--tRNA ligase, cytoplasmic, found in Homo sapiens (Human).